The following is a 147-amino-acid chain: HTH-type transcriptional regulator MgrA (147 aa).

The 132-residue stretch at Lys8–His139 folds into the HTH marR-type domain. Residues Val55–Gln78 constitute a DNA-binding region (H-T-H motif).

It localises to the cytoplasm. In terms of biological role, regulatory protein involved in autolytic activity, multidrug resistance and virulence. Controls autolysis by inactivating LytM, LytN (autolysins) and SarV (autolysis activator) and activating ArlRS, LrgAB and LytSR (autolysis inhibitors). Acts as a dual regulator for resistance to multiple drugs by inactivating NorB and tet38 and activating NorA. Positively controls the expression of virulence accessory gene regulator (agr) to promote alpha-hemolysin (hla) transcription and down-regulates staphylococcal accessory regulator (sarS), leading to repression of surface protein A (spa). Binds directly to hla promoter to augment its activation. Binds to sarS promoter to down-regulate spa expression. In Staphylococcus aureus (strain NCTC 8325 / PS 47), this protein is HTH-type transcriptional regulator MgrA (mgrA).